The following is a 311-amino-acid chain: Malate dehydrogenase (311 aa).

Residues 7–13 (GAAGGIG) and Asp34 contribute to the NAD(+) site. Residues Arg81 and Arg87 each coordinate substrate. NAD(+)-binding positions include Asn94 and 117–119 (ITN). Residues Asn119 and Arg153 each contribute to the substrate site. Catalysis depends on His177, which acts as the Proton acceptor. Met227 is a binding site for NAD(+).

Belongs to the LDH/MDH superfamily. MDH type 1 family. In terms of assembly, homodimer.

It carries out the reaction (S)-malate + NAD(+) = oxaloacetate + NADH + H(+). Functionally, catalyzes the reversible oxidation of malate to oxaloacetate. In Shewanella putrefaciens (strain CN-32 / ATCC BAA-453), this protein is Malate dehydrogenase.